Consider the following 540-residue polypeptide: Putative cysteine ligase BshC (540 aa).

A coiled-coil region spans residues isoleucine 425–isoleucine 453.

Belongs to the BshC family.

In terms of biological role, involved in bacillithiol (BSH) biosynthesis. May catalyze the last step of the pathway, the addition of cysteine to glucosamine malate (GlcN-Mal) to generate BSH. In Staphylococcus aureus (strain NCTC 8325 / PS 47), this protein is Putative cysteine ligase BshC.